The primary structure comprises 424 residues: Glutamate-1-semialdehyde 2,1-aminomutase (424 aa).

Residue Lys-258 is modified to N6-(pyridoxal phosphate)lysine.

It belongs to the class-III pyridoxal-phosphate-dependent aminotransferase family. HemL subfamily. Pyridoxal 5'-phosphate serves as cofactor.

The protein localises to the cytoplasm. The catalysed reaction is (S)-4-amino-5-oxopentanoate = 5-aminolevulinate. The protein operates within porphyrin-containing compound metabolism; protoporphyrin-IX biosynthesis; 5-aminolevulinate from L-glutamyl-tRNA(Glu): step 2/2. The polypeptide is Glutamate-1-semialdehyde 2,1-aminomutase (Pyrobaculum neutrophilum (strain DSM 2338 / JCM 9278 / NBRC 100436 / V24Sta) (Thermoproteus neutrophilus)).